Here is a 146-residue protein sequence, read N- to C-terminus: Large ribosomal subunit protein uL15 (146 aa).

The span at 1-13 shows a compositional bias: basic and acidic residues; the sequence is MKLNELKPNEGSR. A disordered region spans residues 1–54; it reads MKLNELKPNEGSRRNRKRVGRGTSSGYGKTAGRGQKGQLARTGGKTRLGFEGGQ. The span at 23–35 shows a compositional bias: gly residues; sequence TSSGYGKTAGRGQ.

The protein belongs to the universal ribosomal protein uL15 family. As to quaternary structure, part of the 50S ribosomal subunit.

In terms of biological role, binds to the 23S rRNA. The chain is Large ribosomal subunit protein uL15 from Lactobacillus gasseri (strain ATCC 33323 / DSM 20243 / BCRC 14619 / CIP 102991 / JCM 1131 / KCTC 3163 / NCIMB 11718 / NCTC 13722 / AM63).